The sequence spans 272 residues: 3-methyl-2-oxobutanoate hydroxymethyltransferase (272 aa).

2 residues coordinate Mg(2+): Asp54 and Asp93. 3-methyl-2-oxobutanoate-binding positions include 54–55, Asp93, and Lys123; that span reads DS. Residue Glu125 coordinates Mg(2+). Catalysis depends on Glu190, which acts as the Proton acceptor.

This sequence belongs to the PanB family. Homodecamer; pentamer of dimers. Requires Mg(2+) as cofactor.

It localises to the cytoplasm. The enzyme catalyses 3-methyl-2-oxobutanoate + (6R)-5,10-methylene-5,6,7,8-tetrahydrofolate + H2O = 2-dehydropantoate + (6S)-5,6,7,8-tetrahydrofolate. The protein operates within cofactor biosynthesis; (R)-pantothenate biosynthesis; (R)-pantoate from 3-methyl-2-oxobutanoate: step 1/2. In terms of biological role, catalyzes the reversible reaction in which hydroxymethyl group from 5,10-methylenetetrahydrofolate is transferred onto alpha-ketoisovalerate to form ketopantoate. This is 3-methyl-2-oxobutanoate hydroxymethyltransferase from Tropheryma whipplei (strain Twist) (Whipple's bacillus).